The sequence spans 435 residues: NADH-quinone oxidoreductase subunit D (435 aa).

It belongs to the complex I 49 kDa subunit family. As to quaternary structure, NDH-1 is composed of 14 different subunits. Subunits NuoB, C, D, E, F, and G constitute the peripheral sector of the complex.

The protein localises to the cell inner membrane. It catalyses the reaction a quinone + NADH + 5 H(+)(in) = a quinol + NAD(+) + 4 H(+)(out). In terms of biological role, NDH-1 shuttles electrons from NADH, via FMN and iron-sulfur (Fe-S) centers, to quinones in the respiratory chain. The immediate electron acceptor for the enzyme in this species is believed to be ubiquinone. Couples the redox reaction to proton translocation (for every two electrons transferred, four hydrogen ions are translocated across the cytoplasmic membrane), and thus conserves the redox energy in a proton gradient. The protein is NADH-quinone oxidoreductase subunit D of Xylella fastidiosa (strain M23).